Reading from the N-terminus, the 247-residue chain is UPF0273 protein PF1931 (247 aa).

The 245-residue stretch at 3–247 folds into the KaiC domain; sequence RRVKTGIPGM…VLKRGRIYEL (245 aa). 30–37 provides a ligand contact to ATP; sequence GGPGTGKS.

This sequence belongs to the UPF0273 family.

This is UPF0273 protein PF1931 from Pyrococcus furiosus (strain ATCC 43587 / DSM 3638 / JCM 8422 / Vc1).